The chain runs to 339 residues: Serpentine receptor class alpha-22 (339 aa).

The next 6 helical transmembrane spans lie at 33 to 53, 110 to 130, 150 to 170, 199 to 219, 250 to 270, and 284 to 304; these read IFIS…IQAL, VVDL…VFSL, FIAI…FYIA, VRTM…YLSV, IFII…NLLL, and IALF…VIYF.

It belongs to the nematode receptor-like protein sra family.

Its subcellular location is the membrane. The sequence is that of Serpentine receptor class alpha-22 (sra-22) from Caenorhabditis elegans.